The chain runs to 609 residues: MEGKPMRRCTNIRPGETGMDVTSRCTLGDPNKLPEGVPQPARMPYISDKHPRQTLEVINLLRKHRELCDVVLVVGAKKIYAHRVILSACSPYFRAMFTGELAESRQTEVVIRDIDERAMELLIDFAYTSQITVEEGNVQTLLPAACLLQLAEIQEACCEFLKRQLDPSNCLGIRAFADTHSCRELLRIADKFTQHNFQEVMESEEFMLLPANQLIDIISSDELNVRSEEQVFNAVMAWVKYSTQERRPQLPQVLQHVRLPLLSPKFLVGTVGSDPLIKSDEECRDLVDEAKNYLLLPQERPLMQGPRTRPRKPIRCGEVLFAVGGWCSGDAISSVERYDPQTNEWRMVASMSKRRCGVGVSVLDDLLYAVGGHDGSSYLNSVERYDPKTNQWSSDVAPTSTCRTSVGVAVLGGFLYAVGGQDGVSCLNIVERYDPKENKWTRVASMSTRRLGVAVAVLGGFLYAVGGSDGTSPLNTVERYNPQENRWHTIAPMGTRRKHLGCAVYQDMIYAVGGRDDTTELSSAERYNPRTNQWSPVVAMTSRRSGVGLAVVNGQLMAVRGFDGTTYLKTIEVFDPDANTWRLYGGMNYRRLGGGVGVIKMTHCESHIW.

Residues 68-135 (CDVVLVVGAK…AYTSQITVEE (68 aa)) form the BTB domain. The region spanning 170–272 (CLGIRAFADT…SPKFLVGTVG (103 aa)) is the BACK domain. Kelch repeat units follow at residues 319–365 (VLFA…VLDD), 367–413 (LYAV…VLGG), 414–460 (FLYA…VLGG), 462–507 (LYAV…VYQD), 509–554 (IYAV…VVNG), and 556–601 (LMAV…VIKM).

As to quaternary structure, component of the BCR(KLHL20) E3 ubiquitin ligase complex, at least composed of CUL3, KLHL20 and RBX1. Interacts with PDZ-RhoGEF/ARHGEF11, DAPK1, PML and CORO7. Interacts with F-actin. Interacts with IFN-gamma (IFNG). Interacts (via kelch repeats) with IVNS1ABP (via kelch repeats); this interaction blocks the assembly of CUL3-KLHL20 complex.

The protein localises to the cytoplasm. Its subcellular location is the perinuclear region. It is found in the nucleus. It localises to the golgi apparatus. The protein resides in the trans-Golgi network. The protein localises to the cell projection. Its subcellular location is the axon. It is found in the dendrite. Its pathway is protein modification; protein ubiquitination. In terms of biological role, substrate-specific adapter of a BCR (BTB-CUL3-RBX1) E3 ubiquitin-protein ligase complex involved in interferon response and anterograde Golgi to endosome transport. The BCR(KLHL20) E3 ubiquitin ligase complex mediates the ubiquitination of DAPK1, leading to its degradation by the proteasome, thereby acting as a negative regulator of apoptosis. The BCR(KLHL20) E3 ubiquitin ligase complex also specifically mediates 'Lys-33'-linked ubiquitination. Involved in anterograde Golgi to endosome transport by mediating 'Lys-33'-linked ubiquitination of CORO7, promoting interaction between CORO7 and EPS15, thereby facilitating actin polymerization and post-Golgi trafficking. Also acts as a regulator of endothelial migration during angiogenesis by controlling the activation of Rho GTPases. The BCR(KLHL20) E3 ubiquitin ligase complex acts as a regulator of neurite outgrowth by mediating ubiquitination and degradation of PDZ-RhoGEF/ARHGEF11. The sequence is that of Kelch-like protein 20 (KLHL20) from Pongo abelii (Sumatran orangutan).